Reading from the N-terminus, the 290-residue chain is Ribosomal RNA small subunit methyltransferase A (290 aa).

Asparagine 27, leucine 29, glycine 54, glutamate 75, aspartate 100, and asparagine 125 together coordinate S-adenosyl-L-methionine.

It belongs to the class I-like SAM-binding methyltransferase superfamily. rRNA adenine N(6)-methyltransferase family. RsmA subfamily.

The protein localises to the cytoplasm. The enzyme catalyses adenosine(1518)/adenosine(1519) in 16S rRNA + 4 S-adenosyl-L-methionine = N(6)-dimethyladenosine(1518)/N(6)-dimethyladenosine(1519) in 16S rRNA + 4 S-adenosyl-L-homocysteine + 4 H(+). Functionally, specifically dimethylates two adjacent adenosines (A1518 and A1519) in the loop of a conserved hairpin near the 3'-end of 16S rRNA in the 30S particle. May play a critical role in biogenesis of 30S subunits. The chain is Ribosomal RNA small subunit methyltransferase A from Streptococcus pneumoniae (strain ATCC BAA-255 / R6).